Reading from the N-terminus, the 482-residue chain is Putative ankyrin repeat protein FPV232 (482 aa).

9 ANK repeats span residues Ile-36–Glu-65, Arg-69–Ser-100, Tyr-101–Arg-128, Thr-129–Ile-161, Lys-166–Ser-195, Gly-199–His-228, Cys-232–Ile-265, Leu-270–Ile-297, and Glu-301–Phe-332.

This chain is Putative ankyrin repeat protein FPV232, found in Fowlpox virus (strain NVSL) (FPV).